Reading from the N-terminus, the 287-residue chain is tRNA selenocysteine 1-associated protein 1 (287 aa).

2 RRM domains span residues 3–86 (ASLW…YATY) and 96–175 (YSLF…VAIP).

Belongs to the RRM TRSPAP family. Component of the tRNA(Sec) complex composed at least of EEFSEC, SECISBP2, SEPHS1, SEPSECS, TRNAU1AP and tRNA(Sec). Associates with mRNP and/or polysomes. Found in a complex with tRNA(Sec). Interacts with SEPSECS. As to expression, ubiquitous.

Its subcellular location is the nucleus. It localises to the cytoplasm. In terms of biological role, involved in the early steps of selenocysteine biosynthesis and tRNA(Sec) charging to the later steps resulting in the cotranslational incorporation of selenocysteine into selenoproteins. Stabilizes the SECISBP2, EEFSEC and tRNA(Sec) complex. May be involved in the methylation of tRNA(Sec). Enhances efficiency of selenoproteins synthesis. The protein is tRNA selenocysteine 1-associated protein 1 (Trnau1ap) of Rattus norvegicus (Rat).